The primary structure comprises 27 residues: Caerulein precursor fragment R7 (27 aa).

As to expression, expressed by the skin glands.

The protein localises to the secreted. In terms of biological role, antimicrobial peptide. The chain is Caerulein precursor fragment R7 from Xenopus ruwenzoriensis (Uganda clawed frog).